The following is a 408-amino-acid chain: Glutamate N-acetyltransferase (408 aa).

Substrate contacts are provided by threonine 150, lysine 176, threonine 189, glutamate 271, asparagine 403, and threonine 408. Residue threonine 189 is the Nucleophile of the active site.

This sequence belongs to the ArgJ family. In terms of assembly, heterotetramer of two alpha and two beta chains.

It localises to the cytoplasm. The catalysed reaction is N(2)-acetyl-L-ornithine + L-glutamate = N-acetyl-L-glutamate + L-ornithine. It functions in the pathway amino-acid biosynthesis; L-arginine biosynthesis; L-ornithine and N-acetyl-L-glutamate from L-glutamate and N(2)-acetyl-L-ornithine (cyclic): step 1/1. Functionally, catalyzes the transfer of the acetyl group from N(2)-acetylornithine to glutamate, forming N-acetylglutamate and L-ornithine. The polypeptide is Glutamate N-acetyltransferase (Methanococcus maripaludis (strain DSM 14266 / JCM 13030 / NBRC 101832 / S2 / LL)).